Consider the following 357-residue polypeptide: Glycerol-1-phosphate dehydrogenase [NAD(P)+] (357 aa).

NAD(+)-binding positions include 104 to 108 and 126 to 129; these read GKTID and TAAS. Position 131 (D131) interacts with substrate. Residue S135 coordinates NAD(+). D178 lines the substrate pocket. Zn(2+)-binding residues include D178 and H258. Residue H262 coordinates substrate. Zn(2+) is bound at residue H274.

The protein belongs to the glycerol-1-phosphate dehydrogenase family. It depends on Zn(2+) as a cofactor.

The protein localises to the cytoplasm. The enzyme catalyses sn-glycerol 1-phosphate + NAD(+) = dihydroxyacetone phosphate + NADH + H(+). It catalyses the reaction sn-glycerol 1-phosphate + NADP(+) = dihydroxyacetone phosphate + NADPH + H(+). It participates in membrane lipid metabolism; glycerophospholipid metabolism. In terms of biological role, catalyzes the NAD(P)H-dependent reduction of dihydroxyacetonephosphate (DHAP or glycerone phosphate) to glycerol 1-phosphate (G1P). The G1P thus generated is used as the glycerophosphate backbone of phospholipids in the cellular membranes of Archaea. This is Glycerol-1-phosphate dehydrogenase [NAD(P)+] from Methanococcoides burtonii (strain DSM 6242 / NBRC 107633 / OCM 468 / ACE-M).